The sequence spans 953 residues: Valine--tRNA ligase (953 aa).

Positions 42–52 match the 'HIGH' region motif; sequence PNVTGSLHMGH. Residues 554–558 carry the 'KMSKS' region motif; the sequence is KMSKS. Lys557 is a binding site for ATP. A coiled-coil region spans residues 884-952; it reads LIDKDAELDR…LEQQKATIAA (69 aa).

The protein belongs to the class-I aminoacyl-tRNA synthetase family. ValS type 1 subfamily. Monomer.

The protein localises to the cytoplasm. The enzyme catalyses tRNA(Val) + L-valine + ATP = L-valyl-tRNA(Val) + AMP + diphosphate. Functionally, catalyzes the attachment of valine to tRNA(Val). As ValRS can inadvertently accommodate and process structurally similar amino acids such as threonine, to avoid such errors, it has a 'posttransfer' editing activity that hydrolyzes mischarged Thr-tRNA(Val) in a tRNA-dependent manner. This chain is Valine--tRNA ligase, found in Vibrio cholerae serotype O1 (strain ATCC 39315 / El Tor Inaba N16961).